We begin with the raw amino-acid sequence, 560 residues long: Zinc finger protein 619 (560 aa).

10 consecutive C2H2-type zinc fingers follow at residues 188-210 (YKCG…QRVH), 216-238 (YTCK…QKIH), 244-266 (YSCE…QKLH), 272-294 (YECT…QRIH), 300-322 (FKCK…ERIH), 328-350 (YECK…QRIH), 356-378 (YECK…QRFH), 384-406 (YKCN…QRIH), 412-434 (YECQ…QRVH), and 440-462 (YECK…QKWH).

It belongs to the krueppel C2H2-type zinc-finger protein family.

The protein localises to the nucleus. Its function is as follows. May be involved in transcriptional regulation. The sequence is that of Zinc finger protein 619 (ZNF619) from Homo sapiens (Human).